The primary structure comprises 98 residues: Cystatin-B (98 aa).

Met1 is modified (N-acetylmethionine). Residues 46-50 carry the Secondary area of contact motif; it reads QVVAG.

Belongs to the cystatin family. Able to form dimers stabilized by noncovalent forces.

Its subcellular location is the cytoplasm. It is found in the nucleus. In terms of biological role, this is an intracellular thiol proteinase inhibitor. Tightly binding reversible inhibitor of cathepsins L, H and B. The sequence is that of Cystatin-B (CSTB) from Pan troglodytes (Chimpanzee).